Reading from the N-terminus, the 767-residue chain is Protein SQS1 (767 aa).

Residues 1-17 show a composition bias toward basic residues; sequence MAKRHSHYQGSRRRHAR. Positions 1-60 are disordered; it reads MAKRHSHYQGSRRRHARGSNSKKAGRGNAKGIQGRKIKKKPTPTNSWHNSSIPLGEGDLD. Polar residues predominate over residues 42 to 52; that stretch reads TPTNSWHNSSI. At Ser-105 the chain carries Phosphoserine. Residues 176-185 are compositionally biased toward acidic residues; that stretch reads EDSENEDDDS. Positions 176-200 are disordered; that stretch reads EDSENEDDDSQNSPSTDHSLSSNES. Ser-217, Ser-255, Ser-334, Ser-343, and Ser-345 each carry phosphoserine. The disordered stretch occupies residues 466-493; sequence YSDIPISDSSDEGDSYEGDSYEDDEDMA. Residues 474–492 show a composition bias toward acidic residues; sequence SSDEGDSYEGDSYEDDEDM. Residues 594–656 enclose the R3H domain; it reads GLHIQNIKDE…HTSVVVEKIK (63 aa). In terms of domain architecture, G-patch spans 720 to 767; it reads NENIGRRMLEKLGWKSGEGLGIQGNKGISEPIFAKIKKNRSGLRHSES.

The protein belongs to the SQS1 family.

Its subcellular location is the cytoplasm. The protein resides in the nucleus. Its function is as follows. May be involved in splicing since overexpression antagonizes the suppression of splicing defects by SPP382 mutants. The chain is Protein SQS1 (SQS1) from Saccharomyces cerevisiae (strain YJM789) (Baker's yeast).